The chain runs to 186 residues: Secreted chorismate mutase (186 aa).

The first 30 residues, 1–30 (MQPTHTLTRLTVIGKLIIASSFFLSLAVQA), serve as a signal peptide directing secretion. The 77-residue stretch at 31–107 (QQCGQTAPLI…AAKAIQYRYR (77 aa)) folds into the Chorismate mutase domain. A disulfide bridge connects residues Cys-33 and Cys-148. Substrate contacts are provided by residues Arg-43, Lys-54, Asp-63, 99–103 (AKAIQ), and Arg-127.

In terms of assembly, homodimer.

The protein resides in the periplasm. The enzyme catalyses chorismate = prephenate. It functions in the pathway metabolic intermediate biosynthesis; prephenate biosynthesis; prephenate from chorismate: step 1/1. Catalyzes the Claisen rearrangement of chorismate to prephenate. May play some role in the pathogenicity. In Yersinia pestis, this protein is Secreted chorismate mutase (pheA2).